We begin with the raw amino-acid sequence, 296 residues long: NAD kinase (296 aa).

Asp73 acts as the Proton acceptor in catalysis. NAD(+) contacts are provided by residues 73-74, Lys78, 151-152, Arg178, Asp180, and 191-196; these read DG, NE, and TAHAMS.

Belongs to the NAD kinase family. Requires a divalent metal cation as cofactor.

Its subcellular location is the cytoplasm. It carries out the reaction NAD(+) + ATP = ADP + NADP(+) + H(+). Its function is as follows. Involved in the regulation of the intracellular balance of NAD and NADP, and is a key enzyme in the biosynthesis of NADP. Catalyzes specifically the phosphorylation on 2'-hydroxyl of the adenosine moiety of NAD to yield NADP. This chain is NAD kinase, found in Francisella tularensis subsp. mediasiatica (strain FSC147).